A 490-amino-acid polypeptide reads, in one-letter code: Cytochrome P450 2C8 (490 aa).

3 residues coordinate substrate: serine 100, asparagine 204, and arginine 241. Serine 100 bears the Phosphoserine mark. Cysteine 435 is a heme binding site.

Belongs to the cytochrome P450 family. Heme is required as a cofactor.

Its subcellular location is the endoplasmic reticulum membrane. It is found in the microsome membrane. It catalyses the reaction an organic molecule + reduced [NADPH--hemoprotein reductase] + O2 = an alcohol + oxidized [NADPH--hemoprotein reductase] + H2O + H(+). The catalysed reaction is (5Z,8Z,11Z,14Z)-eicosatetraenoate + reduced [NADPH--hemoprotein reductase] + O2 = (11R,12S)-epoxy-(5Z,8Z,14Z)-eicosatrienoate + oxidized [NADPH--hemoprotein reductase] + H2O + H(+). The enzyme catalyses (5Z,8Z,11Z,14Z)-eicosatetraenoate + reduced [NADPH--hemoprotein reductase] + O2 = (11S,12R)-epoxy-(5Z,8Z,14Z)-eicosatrienoate + oxidized [NADPH--hemoprotein reductase] + H2O + H(+). It carries out the reaction (5Z,8Z,11Z,14Z)-eicosatetraenoate + reduced [NADPH--hemoprotein reductase] + O2 = (14R,15S)-epoxy-(5Z,8Z,11Z)-eicosatrienoate + oxidized [NADPH--hemoprotein reductase] + H2O + H(+). It catalyses the reaction (5Z,8Z,11Z,14Z)-eicosatetraenoate + reduced [NADPH--hemoprotein reductase] + O2 = (14S,15R)-epoxy-(5Z,8Z,11Z)-eicosatrienoate + oxidized [NADPH--hemoprotein reductase] + H2O + H(+). The catalysed reaction is (5Z,8Z,11Z,14Z,17Z)-eicosapentaenoate + reduced [NADPH--hemoprotein reductase] + O2 = 11,12-epoxy-(5Z,8Z,14Z,17Z)-eicosatetraenoate + oxidized [NADPH--hemoprotein reductase] + H2O + H(+). The enzyme catalyses (5Z,8Z,11Z,14Z,17Z)-eicosapentaenoate + reduced [NADPH--hemoprotein reductase] + O2 = 14,15-epoxy-(5Z,8Z,11Z,17Z)-eicosatetraenoate + oxidized [NADPH--hemoprotein reductase] + H2O + H(+). It carries out the reaction (5Z,8Z,11Z,14Z,17Z)-eicosapentaenoate + reduced [NADPH--hemoprotein reductase] + O2 = (17R,18S)-epoxy-(5Z,8Z,11Z,14Z)-eicosatetraenoate + oxidized [NADPH--hemoprotein reductase] + H2O + H(+). It catalyses the reaction (5Z,8Z,11Z,14Z,17Z)-eicosapentaenoate + reduced [NADPH--hemoprotein reductase] + O2 = (17S,18R)-epoxy-(5Z,8Z,11Z,14Z)-eicosatetraenoate + oxidized [NADPH--hemoprotein reductase] + H2O + H(+). The catalysed reaction is (4Z,7Z,10Z,13Z,16Z,19Z)-docosahexaenoate + reduced [NADPH--hemoprotein reductase] + O2 = (19R,20S)-epoxy-(4Z,7Z,10Z,13Z,16Z)-docosapentaenoate + oxidized [NADPH--hemoprotein reductase] + H2O + H(+). The enzyme catalyses (4Z,7Z,10Z,13Z,16Z,19Z)-docosahexaenoate + reduced [NADPH--hemoprotein reductase] + O2 = (19S,20R)-epoxy-(4Z,7Z,10Z,13Z,16Z)-docosapentaenoate + oxidized [NADPH--hemoprotein reductase] + H2O + H(+). It carries out the reaction all-trans-retinoate + reduced [NADPH--hemoprotein reductase] + O2 = all-trans-4-hydroxyretinoate + oxidized [NADPH--hemoprotein reductase] + H2O + H(+). It catalyses the reaction 17beta-estradiol + reduced [NADPH--hemoprotein reductase] + O2 = 16alpha,17beta-estriol + oxidized [NADPH--hemoprotein reductase] + H2O + H(+). The catalysed reaction is estrone + reduced [NADPH--hemoprotein reductase] + O2 = 16alpha-hydroxyestrone + oxidized [NADPH--hemoprotein reductase] + H2O + H(+). It participates in steroid metabolism. It functions in the pathway lipid metabolism; arachidonate metabolism. Its pathway is cofactor metabolism; retinol metabolism. In terms of biological role, a cytochrome P450 monooxygenase involved in the metabolism of various endogenous substrates, including fatty acids, steroid hormones and vitamins. Mechanistically, uses molecular oxygen inserting one oxygen atom into a substrate, and reducing the second into a water molecule, with two electrons provided by NADPH via cytochrome P450 reductase (NADPH--hemoprotein reductase). Primarily catalyzes the epoxidation of double bonds of polyunsaturated fatty acids (PUFA) with a preference for the last double bond. Catalyzes the hydroxylation of carbon-hydrogen bonds. Metabolizes all trans-retinoic acid toward its 4-hydroxylated form. Displays 16-alpha hydroxylase activity toward estrogen steroid hormones, 17beta-estradiol (E2) and estrone (E1). Plays a role in the oxidative metabolism of xenobiotics. It is the principal enzyme responsible for the metabolism of the anti-cancer drug paclitaxel (taxol). This is Cytochrome P450 2C8 from Homo sapiens (Human).